A 131-amino-acid polypeptide reads, in one-letter code: Small ribosomal subunit protein uS8 (131 aa).

It belongs to the universal ribosomal protein uS8 family. In terms of assembly, part of the 30S ribosomal subunit. Contacts proteins S5 and S12.

Its function is as follows. One of the primary rRNA binding proteins, it binds directly to 16S rRNA central domain where it helps coordinate assembly of the platform of the 30S subunit. This is Small ribosomal subunit protein uS8 from Nitrosomonas eutropha (strain DSM 101675 / C91 / Nm57).